A 289-amino-acid chain; its full sequence is MAETTASGYIQHHLQNLTFGQLPNGGWGFAHTAAEAKEMGFWAFHVDTLGWSVALGLIFVLLFRMAAKKATSGQPGALQNFVEVLVEFVDGSVKDSFHGRSPVIAPLALTIFVWVFLMNAVDLVPVDWVPQLAILISGDHHIPFRAVSTTDPNATLGMAFSVFALIIFYSIKVKGLGGFIGELTLHPFGSKNIFVQALLIPVNFLLEFVTLIAKPISLALRLFGNMYAGELVFILIAVMFGSGLLWLSGLGVVLQWAWAVFHILIITLQAFIFMMLTIVYLSMAHEENH.

The next 6 membrane-spanning stretches (helical) occupy residues 43-63, 103-123, 160-180, 193-213, 232-252, and 259-279; these read AFHV…VLLF, VIAP…AVDL, FSVF…GGFI, IFVQ…TLIA, VFIL…GLGV, and AVFH…LTIV.

This sequence belongs to the ATPase A chain family. In terms of assembly, F-type ATPases have 2 components, CF(1) - the catalytic core - and CF(0) - the membrane proton channel. CF(1) has five subunits: alpha(3), beta(3), gamma(1), delta(1), epsilon(1). CF(0) has three main subunits: a(1), b(2) and c(9-12). The alpha and beta chains form an alternating ring which encloses part of the gamma chain. CF(1) is attached to CF(0) by a central stalk formed by the gamma and epsilon chains, while a peripheral stalk is formed by the delta and b chains.

The protein localises to the cell inner membrane. Its function is as follows. Key component of the proton channel; it plays a direct role in the translocation of protons across the membrane. This chain is ATP synthase subunit a, found in Pseudomonas fluorescens (strain Pf0-1).